Consider the following 273-residue polypeptide: Galactose-binding lectin (273 aa).

The first 23 residues, 1-23, serve as a signal peptide directing secretion; the sequence is MKPFCVFLTFFLLLAASSKKVDS. Positions 144 and 146 each coordinate Mn(2+). Ca(2+)-binding residues include Asp146, Tyr148, Asn150, and Asp155. Residues Asp155 and His160 each contribute to the Mn(2+) site.

It belongs to the leguminous lectin family. As to quaternary structure, homotetramer.

Functionally, D-galactose specific lectin. This chain is Galactose-binding lectin, found in Arachis hypogaea (Peanut).